We begin with the raw amino-acid sequence, 98 residues long: Cytochrome c-552 (98 aa).

Residues 1–18 form the signal peptide; the sequence is MKKFLLVAVVGLAGITFA. Residues Cys-28, Cys-31, His-32, and Met-77 each contribute to the heme c site.

The protein belongs to the cytochrome c family. Binds 1 heme c group covalently per subunit.

Its function is as follows. Reacts with hydrogenase. The sequence is that of Cytochrome c-552 from Hydrogenobacter thermophilus (strain DSM 6534 / IAM 12695 / TK-6).